The sequence spans 412 residues: uncharacterized protein (412 aa).

A run of 7 repeats spans residues 112 to 116 (GSIRS), 117 to 121 (GSIRS), 122 to 126 (GSIRD), 127 to 131 (GSIRD), 132 to 136 (GSIRS), 137 to 141 (GNIRD), and 142 to 146 (GSVRS). The interval 112–146 (GSIRSGSIRSGSIRDGSIRDGSIRSGNIRDGSVRS) is 7 X 5 AA tandem repeats of G-[NS]-[IV]-R-[DS]. Residues 116-126 (SGSIRSGSIRD) show a composition bias toward low complexity. A disordered region spans residues 116–209 (SGSIRSGSIR…SEKSIKPSTK (94 aa)). Positions 192–209 (NHYAESEYSEKSIKPSTK) are enriched in basic and acidic residues.

Belongs to the asfivirus B407L family.

This is an uncharacterized protein from Ornithodoros (relapsing fever ticks).